Here is a 326-residue protein sequence, read N- to C-terminus: Phosphotriesterase homology protein (326 aa).

The Zn(2+) site is built by histidine 22, histidine 24, lysine 145, histidine 178, histidine 207, and aspartate 264. Lysine 145 carries the N6-carboxylysine modification.

This sequence belongs to the metallo-dependent hydrolases superfamily. Phosphotriesterase family. Zn(2+) serves as cofactor.

This is Phosphotriesterase homology protein (php) from Mycobacterium tuberculosis (strain CDC 1551 / Oshkosh).